The primary structure comprises 469 residues: Asparagine--tRNA ligase (469 aa).

Belongs to the class-II aminoacyl-tRNA synthetase family. In terms of assembly, homodimer.

The protein resides in the cytoplasm. It carries out the reaction tRNA(Asn) + L-asparagine + ATP = L-asparaginyl-tRNA(Asn) + AMP + diphosphate + H(+). The polypeptide is Asparagine--tRNA ligase (Porphyromonas gingivalis (strain ATCC BAA-308 / W83)).